The chain runs to 344 residues: Tripartite motif-containing protein 44 (344 aa).

Disordered regions lie at residues 1 to 25 (MASGVGAAFEELPHDGTCDECEPDE) and 68 to 165 (TPPA…EFDP). Positions 75-92 (GAGKEEAEVKVEQEREIE) are enriched in basic and acidic residues. Positions 93–165 (SEAGEESESE…ETEAESEFDP (73 aa)) are enriched in acidic residues. A B box-type zinc finger spans residues 174 to 215 (VAKRKCPDHGLDLSTYCQEDRQLICVLCPVIGAHQGHQLSTL). Positions 179, 182, 201, and 207 each coordinate Zn(2+). A coiled-coil region spans residues 290 to 325 (AHVTEILADIQSHMDRLMTQMAQAKEQLDTSNESAE). Residues 309-344 (QMAQAKEQLDTSNESAEPKAEGDEEGPSGASEEEDT) are disordered. A compositionally biased stretch (acidic residues) spans 330 to 344 (GDEEGPSGASEEEDT). Ser-336 and Ser-339 each carry phosphoserine.

In terms of assembly, interacts (via coiled coil) with TRIM17 (via coiled coil).

May play a role in the process of differentiation and maturation of neuronal cells. May regulate the activity of TRIM17. Is a negative regulator of PAX6 expression. The sequence is that of Tripartite motif-containing protein 44 (TRIM44) from Pongo abelii (Sumatran orangutan).